A 190-amino-acid polypeptide reads, in one-letter code: Probable thymidylate kinase (190 aa).

7 to 14 (GIDGAGKT) contacts ATP.

It belongs to the thymidylate kinase family.

It catalyses the reaction dTMP + ATP = dTDP + ADP. This chain is Probable thymidylate kinase, found in Thermoplasma volcanium (strain ATCC 51530 / DSM 4299 / JCM 9571 / NBRC 15438 / GSS1).